A 241-amino-acid polypeptide reads, in one-letter code: Spiralin (241 aa).

The first 23 residues, 1-23 (MKKLLSILAVFGVSAVGTTSVVA), serve as a signal peptide directing secretion. C24 is lipidated: N-palmitoyl cysteine. C24 carries S-diacylglycerol cysteine lipidation.

This sequence belongs to the spiralin family. In terms of assembly, seems to occur as dimer, tetramers, and large oligomers of identical chains. Palmitate and stearate are the major lipid components.

The protein resides in the cell membrane. In terms of biological role, major membrane protein of spiroplasma. The polypeptide is Spiralin (spi) (Spiroplasma citri).